Reading from the N-terminus, the 166-residue chain is Ribosome-binding factor A (166 aa).

Residues 122–166 (HVADETDVEDSTDHEDDVTNSEDETKHVDIDTDSEEGTNTDGKAQ) form a disordered region. Acidic residues predominate over residues 126 to 143 (ETDVEDSTDHEDDVTNSE).

This sequence belongs to the RbfA family. In terms of assembly, monomer. Binds 30S ribosomal subunits, but not 50S ribosomal subunits or 70S ribosomes.

The protein resides in the cytoplasm. Its function is as follows. One of several proteins that assist in the late maturation steps of the functional core of the 30S ribosomal subunit. Associates with free 30S ribosomal subunits (but not with 30S subunits that are part of 70S ribosomes or polysomes). Required for efficient processing of 16S rRNA. May interact with the 5'-terminal helix region of 16S rRNA. This Pseudoalteromonas translucida (strain TAC 125) protein is Ribosome-binding factor A.